The primary structure comprises 312 residues: Eukaryotic translation initiation factor 2 subunit 2 (312 aa).

2 disordered regions span residues 26 to 104 and 125 to 146; these read AALG…NLDM and ADQA…SSTW. The residue at position 44 (serine 44) is a Phosphoserine. Acidic residues-rich tracts occupy residues 90–102 and 125–142; these read AASE…EINL and ADQA…DEDN. Residue serine 133 is modified to Phosphoserine. Threonine 145 carries the post-translational modification Phosphothreonine. The segment at 260–284 adopts a C4-type zinc-finger fold; that stretch reads CHTCRSPETILQKDTRLFFLQCESC.

It belongs to the eIF-2-beta/eIF-5 family. Eukaryotic translation initiation factor 2 eIF2 is a heterotrimeric complex composed of an alpha, a beta and a gamma subunit.

The protein resides in the cytoplasm. It is found in the cytosol. In terms of biological role, component of the eIF2 complex that functions in the early steps of protein synthesis by forming a ternary complex with GTP and initiator tRNA. This complex binds to a 40S ribosomal subunit, followed by mRNA binding to form a 43S pre-initiation complex (43S PIC). Junction of the 60S ribosomal subunit to form the 80S initiation complex is preceded by hydrolysis of the GTP bound to eIF2 and release of an eIF2-GDP binary complex. In order for eIF2 to recycle and catalyze another round of initiation, the GDP bound to eIF2 must exchange with GTP by way of a reaction catalyzed by eIF2B. The polypeptide is Eukaryotic translation initiation factor 2 subunit 2 (Drosophila melanogaster (Fruit fly)).